The sequence spans 451 residues: Opioid growth factor receptor-like protein 1 (451 aa).

Disordered regions lie at residues 1-89 and 308-451; these read MGNL…TAKP and ENFI…VLVQ. The span at 43 to 66 shows a compositional bias: low complexity; the sequence is PGQESEQPAQPPEQAGGRPGASPA. A compositionally biased stretch (polar residues) spans 322-341; sequence GSKAQKMSSPLASSHNSQTS. Basic and acidic residues-rich tracts occupy residues 362-381 and 389-399; these read TAED…DRPS and AKPRNTEKDSN. A compositionally biased stretch (low complexity) spans 431-443; it reads NDNQDNENPGNTN.

This sequence belongs to the opioid growth factor receptor family. As to expression, ubiquitous.

This is Opioid growth factor receptor-like protein 1 (OGFRL1) from Homo sapiens (Human).